The primary structure comprises 187 residues: Elongation factor P (187 aa).

Lys-34 carries the post-translational modification N6-(3,6-diaminohexanoyl)-5-hydroxylysine.

Belongs to the elongation factor P family. In terms of processing, may be beta-lysylated on the epsilon-amino group of Lys-34 by the combined action of EpmA and EpmB, and then hydroxylated on the C5 position of the same residue by EpmC (if this protein is present). Lysylation is critical for the stimulatory effect of EF-P on peptide-bond formation. The lysylation moiety may extend toward the peptidyltransferase center and stabilize the terminal 3-CCA end of the tRNA. Hydroxylation of the C5 position on Lys-34 may allow additional potential stabilizing hydrogen-bond interactions with the P-tRNA.

It localises to the cytoplasm. The protein operates within protein biosynthesis; polypeptide chain elongation. In terms of biological role, involved in peptide bond synthesis. Alleviates ribosome stalling that occurs when 3 or more consecutive Pro residues or the sequence PPG is present in a protein, possibly by augmenting the peptidyl transferase activity of the ribosome. Modification of Lys-34 is required for alleviation. This chain is Elongation factor P, found in Thioalkalivibrio sulfidiphilus (strain HL-EbGR7).